The primary structure comprises 350 residues: Guanine nucleotide-binding protein G(t) subunit alpha-1 (350 aa).

Residues 1-21 (MGAGASAEEKHSRELEKKLKE) form a disordered region. Gly-2 carries N-myristoyl glycine lipidation. The span at 7–21 (AEEKHSRELEKKLKE) shows a compositional bias: basic and acidic residues. Residues 28 to 350 (RTVKLLLLGA…KENLKDCGLF (323 aa)) form the G-alpha domain. Residues 31-44 (KLLLLGAGESGKST) form a G1 motif region. 36–43 (GAGESGKS) is a GTP binding site. Ser-43 serves as a coordination point for Mg(2+). Phosphotyrosine is present on Tyr-142. GTP contacts are provided by residues Asp-146, 171–177 (LRSRVKT), Gly-199, 265–268 (NKKD), and Ala-322. The tract at residues 169–177 (DVLRSRVKT) is G2 motif. Residue Thr-177 participates in Mg(2+) binding. A G3 motif region spans residues 192–201 (FRMFDVGGQR). Residues 261-268 (VLFLNKKD) form a G4 motif region. A G5 motif region spans residues 320–325 (TCATDT). The segment at 340-350 (IKENLKDCGLF) is interaction with RHO.

Belongs to the G-alpha family. G(i/o/t/z) subfamily. Heterotrimeric G proteins are composed of 3 subunits alpha, beta and gamma. The alpha chain contains the guanine nucleotide binding site. Interacts with RHO. Interacts with RGS9 and PDE6G. Interacts (when myristoylated) with UNC119; interaction is required for localization in sensory neurons. As to expression, in the retina, expressed in the rod photoreceptors.

It localises to the cell projection. Its subcellular location is the cilium. The protein localises to the photoreceptor outer segment. It is found in the membrane. The protein resides in the photoreceptor inner segment. Functions as a signal transducer for the rod photoreceptor RHO. Required for normal RHO-mediated light perception by the retina. Guanine nucleotide-binding proteins (G proteins) function as transducers downstream of G protein-coupled receptors (GPCRs), such as the photoreceptor RHO. The alpha chain contains the guanine nucleotide binding site and alternates between an active, GTP-bound state and an inactive, GDP-bound state. Activated RHO promotes GDP release and GTP binding. Signaling is mediated via downstream effector proteins, such as cGMP-phosphodiesterase. The protein is Guanine nucleotide-binding protein G(t) subunit alpha-1 (Gnat1) of Mus musculus (Mouse).